We begin with the raw amino-acid sequence, 437 residues long: Type II methylase M.HgiEI (437 aa).

An SAM-dependent MTase C5-type domain is found at 4-431 (FRFIDLFAGI…KRLQCVKLFE (428 aa)). Cys75 is a catalytic residue.

It belongs to the class I-like SAM-binding methyltransferase superfamily. C5-methyltransferase family.

It carries out the reaction a 2'-deoxycytidine in DNA + S-adenosyl-L-methionine = a 5-methyl-2'-deoxycytidine in DNA + S-adenosyl-L-homocysteine + H(+). Functionally, a methylase that recognizes the double-stranded sequence 5'-GGWCC-3', methylates C-? on both strands, and protects the DNA from cleavage by the HgiEI endonuclease. This system is more active than isoschizomeric RM.HgiBI. The chain is Type II methylase M.HgiEI from Herpetosiphon aurantiacus (Herpetosiphon giganteus).